Here is a 257-residue protein sequence, read N- to C-terminus: 4-hydroxy-tetrahydrodipicolinate reductase (257 aa).

Residues 7–12 (GAAGRM), Asp32, 91–93 (GTT), and 115–118 (SPNF) contribute to the NAD(+) site. The active-site Proton donor/acceptor is the His147. His148 is a (S)-2,3,4,5-tetrahydrodipicolinate binding site. Lys151 serves as the catalytic Proton donor. 157-158 (GT) contacts (S)-2,3,4,5-tetrahydrodipicolinate.

The protein belongs to the DapB family.

The protein resides in the cytoplasm. It catalyses the reaction (S)-2,3,4,5-tetrahydrodipicolinate + NAD(+) + H2O = (2S,4S)-4-hydroxy-2,3,4,5-tetrahydrodipicolinate + NADH + H(+). It carries out the reaction (S)-2,3,4,5-tetrahydrodipicolinate + NADP(+) + H2O = (2S,4S)-4-hydroxy-2,3,4,5-tetrahydrodipicolinate + NADPH + H(+). It functions in the pathway amino-acid biosynthesis; L-lysine biosynthesis via DAP pathway; (S)-tetrahydrodipicolinate from L-aspartate: step 4/4. Functionally, catalyzes the conversion of 4-hydroxy-tetrahydrodipicolinate (HTPA) to tetrahydrodipicolinate. In Archaeoglobus fulgidus (strain ATCC 49558 / DSM 4304 / JCM 9628 / NBRC 100126 / VC-16), this protein is 4-hydroxy-tetrahydrodipicolinate reductase.